Here is a 126-residue protein sequence, read N- to C-terminus: Large ribosomal subunit protein bL12 (126 aa).

The protein belongs to the bacterial ribosomal protein bL12 family. Homodimer. Part of the ribosomal stalk of the 50S ribosomal subunit. Forms a multimeric L10(L12)X complex, where L10 forms an elongated spine to which 2 to 4 L12 dimers bind in a sequential fashion. Binds GTP-bound translation factors.

In terms of biological role, forms part of the ribosomal stalk which helps the ribosome interact with GTP-bound translation factors. Is thus essential for accurate translation. The chain is Large ribosomal subunit protein bL12 from Francisella tularensis subsp. mediasiatica (strain FSC147).